The sequence spans 230 residues: Protein-L-isoaspartate O-methyltransferase 1 (230 aa).

Residue serine 65 is part of the active site.

The protein belongs to the methyltransferase superfamily. L-isoaspartyl/D-aspartyl protein methyltransferase family. In terms of assembly, monomer. Expressed in roots, rosette leaves, stems, cauline leaves, flowers and developing seeds.

It is found in the cytoplasm. It carries out the reaction [protein]-L-isoaspartate + S-adenosyl-L-methionine = [protein]-L-isoaspartate alpha-methyl ester + S-adenosyl-L-homocysteine. Functionally, catalyzes the methyl esterification of L-isoaspartyl residues in peptides and proteins that result from spontaneous decomposition of normal L-aspartyl and L-asparaginyl residues. It plays a role in the repair and/or degradation of damaged proteins. Contributes to seed longevity and germination vigor by limiting the abnormal accumulation of the L-isoaspartyl residues in seed proteins. The protein is Protein-L-isoaspartate O-methyltransferase 1 (PIMT1) of Arabidopsis thaliana (Mouse-ear cress).